Reading from the N-terminus, the 342-residue chain is HTH-type transcriptional regulator GbpR (342 aa).

In terms of domain architecture, HTH lysR-type spans 16-73 (LKLRHLQLFVALDEHRNLHRAAASLTMSQPAASKLLGDLEESLGVTLFERHGRGVEPN). A DNA-binding region (H-T-H motif) is located at residues 33–52 (LHRAAASLTMSQPAASKLLG).

Belongs to the LysR transcriptional regulatory family.

Functionally, does not seem to be required for sbpA expression. The sequence is that of HTH-type transcriptional regulator GbpR (gbpR) from Azospirillum brasilense.